The following is a 457-amino-acid chain: Probable ECA polymerase (457 aa).

Helical transmembrane passes span 3-23, 41-61, 65-85, 118-138, 154-174, 181-201, 206-226, 227-247, 340-360, 377-397, and 408-428; these read LLQF…ILTL, MLFL…VFGF, VVPA…YAIY, IMAL…GFLL, GVAL…VYFL, WLLF…IVGG, IIIA…ITLW, MLAL…LKRY, LVVM…GLII, YKAA…IVLA, and VVFF…LYWL.

It belongs to the WzyE family. Probably part of a complex composed of WzxE, WzyE and WzzE.

The protein localises to the cell inner membrane. Its pathway is bacterial outer membrane biogenesis; enterobacterial common antigen biosynthesis. Functionally, probably involved in the polymerization of enterobacterial common antigen (ECA) trisaccharide repeat units. This chain is Probable ECA polymerase, found in Erwinia tasmaniensis (strain DSM 17950 / CFBP 7177 / CIP 109463 / NCPPB 4357 / Et1/99).